A 95-amino-acid polypeptide reads, in one-letter code: Ribonuclease P protein component 1 (95 aa).

It belongs to the eukaryotic/archaeal RNase P protein component 1 family. Consists of a catalytic RNA component and at least 4 protein subunits. Forms a subcomplex with Rnp4 which stimulates the catalytic RNA.

It is found in the cytoplasm. The catalysed reaction is Endonucleolytic cleavage of RNA, removing 5'-extranucleotides from tRNA precursor.. In terms of biological role, part of ribonuclease P, a protein complex that generates mature tRNA molecules by cleaving their 5'-ends. The chain is Ribonuclease P protein component 1 from Methanocaldococcus jannaschii (strain ATCC 43067 / DSM 2661 / JAL-1 / JCM 10045 / NBRC 100440) (Methanococcus jannaschii).